The primary structure comprises 498 residues: Glutamyl-tRNA(Gln) amidotransferase subunit A (498 aa).

Catalysis depends on charge relay system residues lysine 80 and serine 155. The tract at residues 132–159 is disordered; it reads SSTENSAYGPTRNPWDTDRVPGGSSGGS. The active-site Acyl-ester intermediate is serine 179.

It belongs to the amidase family. GatA subfamily. As to quaternary structure, heterotrimer of A, B and C subunits.

The catalysed reaction is L-glutamyl-tRNA(Gln) + L-glutamine + ATP + H2O = L-glutaminyl-tRNA(Gln) + L-glutamate + ADP + phosphate + H(+). In terms of biological role, allows the formation of correctly charged Gln-tRNA(Gln) through the transamidation of misacylated Glu-tRNA(Gln) in organisms which lack glutaminyl-tRNA synthetase. The reaction takes place in the presence of glutamine and ATP through an activated gamma-phospho-Glu-tRNA(Gln). In Thermobifida fusca (strain YX), this protein is Glutamyl-tRNA(Gln) amidotransferase subunit A.